Consider the following 61-residue polypeptide: Large ribosomal subunit protein bL32 (61 aa).

Residues 1–16 (MPTPKKKTSRSKRDMR) show a composition bias toward basic residues. The segment at 1 to 47 (MPTPKKKTSRSKRDMRRSHDGLTAPAIAVEKKTGELVRPHRAHKGAD) is disordered. Residues 29-38 (VEKKTGELVR) show a composition bias toward basic and acidic residues.

The protein belongs to the bacterial ribosomal protein bL32 family.

The sequence is that of Large ribosomal subunit protein bL32 from Bdellovibrio bacteriovorus (strain ATCC 15356 / DSM 50701 / NCIMB 9529 / HD100).